The primary structure comprises 336 residues: Anthranilate phosphoribosyltransferase (336 aa).

Residues Gly78, 81 to 82 (GD), Thr86, 88 to 91 (NVST), 106 to 114 (KHGNYSVSS), and Ser118 contribute to the 5-phospho-alpha-D-ribose 1-diphosphate site. Gly78 is an anthranilate binding site. Residue Ser90 participates in Mg(2+) binding. Asn109 contributes to the anthranilate binding site. An anthranilate-binding site is contributed by Arg164. Residues Asp222 and Glu223 each coordinate Mg(2+).

It belongs to the anthranilate phosphoribosyltransferase family. As to quaternary structure, homodimer. Requires Mg(2+) as cofactor.

The catalysed reaction is N-(5-phospho-beta-D-ribosyl)anthranilate + diphosphate = 5-phospho-alpha-D-ribose 1-diphosphate + anthranilate. It participates in amino-acid biosynthesis; L-tryptophan biosynthesis; L-tryptophan from chorismate: step 2/5. In terms of biological role, catalyzes the transfer of the phosphoribosyl group of 5-phosphorylribose-1-pyrophosphate (PRPP) to anthranilate to yield N-(5'-phosphoribosyl)-anthranilate (PRA). The chain is Anthranilate phosphoribosyltransferase from Halobacterium salinarum (strain ATCC 29341 / DSM 671 / R1).